The chain runs to 117 residues: Large ribosomal subunit protein bL20c (117 aa).

Belongs to the bacterial ribosomal protein bL20 family.

Its subcellular location is the plastid. It is found in the chloroplast. Functionally, binds directly to 23S ribosomal RNA and is necessary for the in vitro assembly process of the 50S ribosomal subunit. It is not involved in the protein synthesizing functions of that subunit. This Drimys granadensis protein is Large ribosomal subunit protein bL20c.